Here is a 278-residue protein sequence, read N- to C-terminus: Transcriptional regulator ICP22 homolog (278 aa).

2 disordered regions span residues 1-42 (MFCT…RDTS) and 154-229 (CDVS…KRPQ). Residues 1 to 142 (MFCTSPATRG…PRGEDGFIEA (142 aa)) form an IE62-binding region. 2 stretches are compositionally biased toward acidic residues: residues 155-169 (DVSDDGGEDDSDDDG) and 183-205 (AESSDGEDFIVEEESEESTDSCE).

It belongs to the herpesviridae ICP22 family. Interacts with IE62; this interaction modulates the function of IE62. Interacts with several components of host pre-initiation complex including GTF2E1, GTF2H2 and POLR2A; these interactions lead to repression of gene transcription. Interacts with host ASF1A; altering its ability to bind histones. In terms of processing, phosphorylated in vitro by host and by protein kinase ORF47.

Its subcellular location is the host cytoplasm. The protein localises to the host nucleus. It is found in the virion tegument. Functionally, immediate early (EI) protein that functions as a transcriptional regulator of cellular and viral mRNAs mainly by interacting with several general transcription factors thereby disorganizing the preinitiation complex at certain promoters. May additionally help to regulate levels of histones in virus-infected cells by interacting with host ASF1. By inhibiting host transcriptional program, IE63 plays a major role in the ability of VZV to overcome the innate immune response to the virus. The chain is Transcriptional regulator ICP22 homolog from Varicella-zoster virus (strain Dumas) (HHV-3).